A 170-amino-acid chain; its full sequence is Protein SprT (170 aa).

Residues 22-165 form the SprT-like domain; that stretch reads LQLANQHLGT…RQCGEKLQFI (144 aa). Position 78 (H78) interacts with Zn(2+). Residue E79 is part of the active site. A Zn(2+)-binding site is contributed by H82.

Belongs to the SprT family. Zn(2+) serves as cofactor.

It is found in the cytoplasm. The protein is Protein SprT of Yersinia pseudotuberculosis serotype IB (strain PB1/+).